A 450-amino-acid polypeptide reads, in one-letter code: Phosphoglucosamine mutase (450 aa).

Ser-104 serves as the catalytic Phosphoserine intermediate. Ser-104, Asp-243, Asp-245, and Asp-247 together coordinate Mg(2+). Ser-104 is modified (phosphoserine).

This sequence belongs to the phosphohexose mutase family. Mg(2+) serves as cofactor. Post-translationally, activated by phosphorylation.

It catalyses the reaction alpha-D-glucosamine 1-phosphate = D-glucosamine 6-phosphate. Functionally, catalyzes the conversion of glucosamine-6-phosphate to glucosamine-1-phosphate. The sequence is that of Phosphoglucosamine mutase from Cutibacterium acnes (strain DSM 16379 / KPA171202) (Propionibacterium acnes).